An 84-amino-acid polypeptide reads, in one-letter code: ATP synthase subunit c (84 aa).

The next 2 membrane-spanning stretches (helical) occupy residues 9–29 and 57–77; these read LGLA…GCGI and ILGL…NLII.

It belongs to the ATPase C chain family. In terms of assembly, F-type ATPases have 2 components, F(1) - the catalytic core - and F(0) - the membrane proton channel. F(1) has five subunits: alpha(3), beta(3), gamma(1), delta(1), epsilon(1). F(0) has three main subunits: a(1), b(2) and c(10-14). The alpha and beta chains form an alternating ring which encloses part of the gamma chain. F(1) is attached to F(0) by a central stalk formed by the gamma and epsilon chains, while a peripheral stalk is formed by the delta and b chains.

The protein localises to the cell membrane. Functionally, f(1)F(0) ATP synthase produces ATP from ADP in the presence of a proton or sodium gradient. F-type ATPases consist of two structural domains, F(1) containing the extramembraneous catalytic core and F(0) containing the membrane proton channel, linked together by a central stalk and a peripheral stalk. During catalysis, ATP synthesis in the catalytic domain of F(1) is coupled via a rotary mechanism of the central stalk subunits to proton translocation. Key component of the F(0) channel; it plays a direct role in translocation across the membrane. A homomeric c-ring of between 10-14 subunits forms the central stalk rotor element with the F(1) delta and epsilon subunits. The polypeptide is ATP synthase subunit c (Lawsonia intracellularis (strain PHE/MN1-00)).